The primary structure comprises 416 residues: E3 ubiquitin-protein ligase makorin-2 (416 aa).

2 C3H1-type zinc fingers span residues 2–29 (STKQ…HDLA) and 31–58 (SKPS…HTRP). Over residues 113–122 (NLSGMAERKT) the composition is skewed to basic and acidic residues. The tract at residues 113–142 (NLSGMAERKTQPSMVSNPGSCSDPQPSPEM) is disordered. Residues 123–136 (QPSMVSNPGSCSDP) are compositionally biased toward polar residues. Residue Ser139 is modified to Phosphoserine. A C3H1-type 3 zinc finger spans residues 165–192 (SNEQQLCPYAAAGECRFGDACVYLHGEV). A makorin-type Cys-His region spans residues 193 to 222 (CEICRLQVLHPFDPEQRKAHEKICMLTFEH). The RING-type zinc-finger motif lies at 238–292 (CSICMEVILEKASASERRFGILSNCNHTYCLSCIRQWRCAKQFENPIIKSCPECR). The C3H1-type 4 zinc finger occupies 321 to 350 (GMGKKACKYFEQGKGTCPFGSKCLYRHAYP).

As to quaternary structure, interacts with PDLIM2 (via LIM zinc-binding domain). Interacts with RELA. As to expression, expressed in sperm, with significantly reduced expression in sperm of patients with oligoasthenoteratozoospermia (at protein level). Widely expressed with expression in testis, ovary, small intestine, colon, peripheral blood leukocytes, fetal liver, bone marrow, thymus, lymph node and spleen.

Its subcellular location is the cytoplasm. The protein resides in the nucleus. The enzyme catalyses S-ubiquitinyl-[E2 ubiquitin-conjugating enzyme]-L-cysteine + [acceptor protein]-L-lysine = [E2 ubiquitin-conjugating enzyme]-L-cysteine + N(6)-ubiquitinyl-[acceptor protein]-L-lysine.. It participates in protein modification; protein ubiquitination. Functionally, E3 ubiquitin ligase catalyzing the covalent attachment of ubiquitin moieties onto substrate proteins. Promotes the polyubiquitination and proteasome-dependent degradation of RELA/p65, thereby suppressing RELA-mediated NF-kappaB transactivation and negatively regulating inflammatory responses. Plays a role in the regulation of spermiation and in male fertility. The protein is E3 ubiquitin-protein ligase makorin-2 (MKRN2) of Homo sapiens (Human).